Here is a 444-residue protein sequence, read N- to C-terminus: uncharacterized protein (444 aa).

In terms of domain architecture, Radical SAM core spans 164 to 381 (GAYGKSFLLE…EKALKKEGIR (218 aa)). [4Fe-4S] cluster is bound by residues C178, C182, and C185.

[4Fe-4S] cluster is required as a cofactor.

This is an uncharacterized protein from Methanocaldococcus jannaschii (strain ATCC 43067 / DSM 2661 / JAL-1 / JCM 10045 / NBRC 100440) (Methanococcus jannaschii).